Consider the following 429-residue polypeptide: MMNPRRLPPLPSSTSSASAADDMDPRVWRRLPQPLVDRVLACLPTPSFLRLRAACRRFYHLLFSSPFLHSHLLLSPHLPFFAFVVPAAGHLLLLDPTATASWSRLPLPLPPVAGGPAAFSPAAASAGLLAFLSDASGHKTLLLANPITRLLAALPISPTPRLSPTVGLAAGPTSIIAVVAGDDLVSPFAVKNISADTFVADAASVPPSGFWAPSSLLPRLSSLDPGAGMAFASGRFYCMSSSPFAVLVFDVAENVWSKVQPPMRRFLRSPALVELGGGREGAARVALVSAVEKSRLSVPRSVRLWTLRGGGGGGGGGAWTEVARMPPEVHAQFAAAEGGRGFECAAHGDYVVLAPRGPVAQAPTSALVFDSRRDEWRWAPPCPYVVVAHHGGAGAAGFRVFAYEPRLATPAIGLLDATAPVALHGMHDG.

Residues 1-11 (MMNPRRLPPLP) show a composition bias toward pro residues. Residues 1–21 (MMNPRRLPPLPSSTSSASAAD) form a disordered region. Residues 25–71 (PRVWRRLPQPLVDRVLACLPTPSFLRLRAACRRFYHLLFSSPFLHSH) enclose the F-box domain. A run of 2 helical transmembrane segments spans residues 72–92 (LLLS…GHLL) and 112–132 (VAGG…LAFL). Kelch repeat units lie at residues 229 to 277 (MAFA…ELGG), 284 to 339 (RVAL…AEGG), and 350 to 397 (YVVL…GAAG).

Part of a putative SCF (ASK/Cullin/F-box) ubiquitin ligase complex. Interacts with FL/APO2. In terms of tissue distribution, expressed in seedlings, roots, leaves, shoot apical meristem (SAM), developing panicles, and, at lower levels, in developing seeds.

The protein resides in the membrane. It functions in the pathway protein modification; protein ubiquitination. Component of SCF(ASK-cullin-F-box) E3 ubiquitin ligase complexes, which may mediate the ubiquitination and subsequent proteasomal degradation of target proteins. Together with FL/APO2, involved in the temporal regulation of meristem identity during both vegetative and reproductive developments in an APO2-dependent manner. Promotes spikelet formation by suppressing the precocious conversion of inflorescence meristems to spikelet meristems, probably via a positive regulation of class-C floral homeotic genes, but not of class-B genes, and through the control of cell proliferation in meristems. Mediates culm development and strength/diameter enhancement at internodes. Required for the regulation of the plastochron, floral organ identity, and floral determinacy. Controls the number of primary rachis branches (PRBs). May trigger the formation of vascular bundle systems which, consequently, promote carbohydrate translocation to panicles. Involved in ozone-induced grain yield regulation. This chain is Protein ABERRANT PANICLE ORGANIZATION 1, found in Oryza sativa subsp. indica (Rice).